The sequence spans 117 residues: Hainantoxin-XV (117 aa).

The signal sequence occupies residues 1 to 20 (MKLCAVIIASLLVCVAVASS). The disordered stretch occupies residues 20–55 (SSDNQKEFAQEKEMTREETQSLGEHEKDDEVTGSEE). A propeptide spanning residues 21–56 (SDNQKEFAQEKEMTREETQSLGEHEKDDEVTGSEER) is cleaved from the precursor. Residues 23–55 (NQKEFAQEKEMTREETQSLGEHEKDDEVTGSEE) are compositionally biased toward basic and acidic residues. Intrachain disulfides connect C58–C72, C65–C78, C69–C115, and C71–C91.

Belongs to the neurotoxin 03 (Tx2) family. 02 subfamily. HNTX-XV sub-subfamily. In terms of tissue distribution, expressed by the venom gland.

The protein resides in the secreted. Putative ion channel inhibitor. The sequence is that of Hainantoxin-XV from Cyriopagopus hainanus (Chinese bird spider).